The sequence spans 205 residues: Small ribosomal subunit protein uS4 (205 aa).

Residues 1 to 16 (MSKRESSKYKIDRRMG) are compositionally biased toward basic and acidic residues. A disordered region spans residues 1-46 (MSKRESSKYKIDRRMGENIWGRPKSPVNRREYGPGQHGQRRKGKLS). In terms of domain architecture, S4 RNA-binding spans 94–157 (SRLDAIVYRA…KQLVTVLEAV (64 aa)).

It belongs to the universal ribosomal protein uS4 family. Part of the 30S ribosomal subunit. Contacts protein S5. The interaction surface between S4 and S5 is involved in control of translational fidelity.

Functionally, one of the primary rRNA binding proteins, it binds directly to 16S rRNA where it nucleates assembly of the body of the 30S subunit. Its function is as follows. With S5 and S12 plays an important role in translational accuracy. This chain is Small ribosomal subunit protein uS4, found in Rhizobium etli (strain ATCC 51251 / DSM 11541 / JCM 21823 / NBRC 15573 / CFN 42).